A 574-amino-acid polypeptide reads, in one-letter code: 4-oxocyclohexanecarboxylate 2-dehydrogenase (574 aa).

It belongs to the FAD-dependent oxidoreductase 2 family. As to quaternary structure, monomer. Homodimer. FAD serves as cofactor.

It carries out the reaction 4-oxocyclohexane-1-carboxylate + O2 = 4-oxocyclohex-2-ene-1-carboxylate + H2O2. Its activity is regulated as follows. Inhibited by 5,5'-dithio-bis(2- nitrobenzoate) and N-bromosuccinimide, but not by thiol and chelating reagents. Desaturase involved in a cyclohexanecarboxylate (CHCA) degradation pathway. Catalyzes the conversion of 4-oxocyclohexanecarboxylate (4-oxoCHCA) to 4-oxocyclohexenecarboxylate. Is highly specific for 4-oxocyclohexanecarboxylic acid and shows only slight activity with 4-oxo-2-methylcyclohex-2-enecarboxylic acid. The protein is 4-oxocyclohexanecarboxylate 2-dehydrogenase of Sinomonas cyclohexanicum (Corynebacterium cyclohexanicum).